We begin with the raw amino-acid sequence, 356 residues long: MSETPLIDAMLAEHAELEKQLADPALHADAAAARKAGRRFAMLSPIVATHRKLATARDDLATARELSADDPSFADEVTELESSIAELETQLSDMLAPRDPHDGDDILLEVKSGEGGEESALFAADLARMYIRYAERHGWKVTVLDETESDLGGYKDATLAIASKGDSADGVWSRLKFEGGVHRVQRVPVTESQGRVHTSAAGVLVYPEPEEVEEIQIDESDLRIDVYRSSGKGGQGVNTTDSAVRITHLPTGIVVTCQNERSQLQNKARAMQVLAARLQALAEEQAQADASAGRASQIRTVDRSERIRTYNFPENRITDHRVGFKAHNLDQVLDGDLDALFDALAAADRKARLQEA.

An N5-methylglutamine modification is found at Gln235.

Belongs to the prokaryotic/mitochondrial release factor family. Methylated by PrmC. Methylation increases the termination efficiency of RF1.

It localises to the cytoplasm. Its function is as follows. Peptide chain release factor 1 directs the termination of translation in response to the peptide chain termination codons UAG and UAA. This is Peptide chain release factor 1 from Mycobacteroides abscessus (strain ATCC 19977 / DSM 44196 / CCUG 20993 / CIP 104536 / JCM 13569 / NCTC 13031 / TMC 1543 / L948) (Mycobacterium abscessus).